We begin with the raw amino-acid sequence, 168 residues long: Nicotinamide-nucleotide adenylyltransferase (168 aa).

Positions 8, 9, 13, 16, 119, 121, 124, 126, 127, and 130 each coordinate ATP.

This sequence belongs to the archaeal NMN adenylyltransferase family. In terms of assembly, homohexamer existing as a trimer of dimers.

The protein localises to the cytoplasm. The enzyme catalyses beta-nicotinamide D-ribonucleotide + ATP + H(+) = diphosphate + NAD(+). It participates in cofactor biosynthesis; NAD(+) biosynthesis; NAD(+) from nicotinamide D-ribonucleotide: step 1/1. Catalyzes the formation of NAD(+) from nicotinamide mononucleotide (NMN) and ATP. This is Nicotinamide-nucleotide adenylyltransferase from Methanocaldococcus jannaschii (strain ATCC 43067 / DSM 2661 / JAL-1 / JCM 10045 / NBRC 100440) (Methanococcus jannaschii).